The sequence spans 395 residues: LIM/homeobox protein Lhx3 (395 aa).

LIM zinc-binding domains lie at 28-78 (CAGC…CKED) and 87-141 (CAAC…CKAD). The segment at residues 154 to 213 (AKRPRTTITAKQLETLKNAYNNSPKPARHVREQLSSETGLDMRVVQVWFQNRRAKEKRLK) is a DNA-binding region (homeobox). 2 disordered regions span residues 209–325 (EKRL…LQAL) and 348–395 (GGQG…HAQF). Positions 257–276 (DEPSMSEMSHSNGIYSNLSE) are enriched in polar residues.

The protein resides in the nucleus. Transcription factor. Defines subclasses of motoneurons that segregate into columns in the spinal cord and select distinct axon pathways. Acts in conjunction with LIM-1, ISL-1 and ISL-2. This chain is LIM/homeobox protein Lhx3 (LHX3), found in Gallus gallus (Chicken).